Consider the following 1938-residue polypeptide: Myosin-1 (1938 aa).

The Myosin N-terminal SH3-like domain occupies 33–82 (DAKTSVFVADPKESFVKATVQSREGGKVTAKTEAGATVTVKEDQVFPMNP). Thr-64 and Thr-69 each carry phosphothreonine. One can recognise a Myosin motor domain in the interval 86-781 (DKIEDMAMMT…LLGLLEEMRD (696 aa)). Lys-130 carries the N6,N6,N6-trimethyllysine modification. Residue 179–186 (GESGAGKT) coordinates ATP. Tyr-389 carries the post-translational modification Phosphotyrosine. Residue Thr-419 is modified to Phosphothreonine. A Phosphotyrosine modification is found at Tyr-424. A Phosphoserine modification is found at Ser-625. The actin-binding stretch occupies residues 658–680 (LNKLMTNLRSTHPHFVRCIIPNE). Position 756 is a pros-methylhistidine (His-756). The tract at residues 760 to 774 (KFGHTKVFFKAGLLG) is actin-binding. The IQ domain occupies 784-813 (LAQLITRTQARCRGFLARVEYQKMVERRES). Residues 842–1938 (LLKSAETEKE…EVHTKIISEE (1097 aa)) adopt a coiled-coil conformation. A phosphoserine mark is found at Ser-1091 and Ser-1095. Disordered regions lie at residues 1124 to 1146 (EIEA…SREL) and 1152 to 1171 (RLEE…KKRE). The span at 1127 to 1146 (AERASRAKAEKQRSDLSREL) shows a compositional bias: basic and acidic residues. Residues Ser-1161 and Ser-1236 each carry the phosphoserine modification. Thr-1240 is subject to Phosphothreonine. Residues Ser-1242 and Ser-1260 each carry the phosphoserine modification. Residues Thr-1264 and Thr-1285 each carry the phosphothreonine modification. A phosphoserine mark is found at Ser-1287, Ser-1291, Ser-1302, and Ser-1305. Residue Tyr-1463 is modified to Phosphotyrosine. A Phosphothreonine modification is found at Thr-1466. Ser-1473 is subject to Phosphoserine. A Phosphotyrosine modification is found at Tyr-1491. Ser-1494 is modified (phosphoserine). Position 1500 is a phosphothreonine (Thr-1500). Ser-1513 carries the post-translational modification Phosphoserine. Thr-1516 carries the phosphothreonine modification. Ser-1541, Ser-1553, Ser-1573, Ser-1599, Ser-1602, Ser-1713, and Ser-1725 each carry phosphoserine. 2 positions are modified to phosphothreonine: Thr-1729 and Thr-1735.

The protein belongs to the TRAFAC class myosin-kinesin ATPase superfamily. Myosin family. In terms of assembly, muscle myosin is a hexameric protein that consists of 2 heavy chain subunits (MHC), 2 alkali light chain subunits (MLC) and 2 regulatory light chain subunits (MLC-2). Interacts with SLC26A5.

Its subcellular location is the cytoplasm. The protein resides in the myofibril. Its function is as follows. Required for normal hearing. It plays a role in cochlear amplification of auditory stimuli, likely through the positive regulation of prestin (SLC26A5) activity and outer hair cell (OHC) electromotility. The sequence is that of Myosin-1 (MYH1) from Bos taurus (Bovine).